The chain runs to 362 residues: Probable dual-specificity RNA methyltransferase RlmN (362 aa).

Glutamate 105 functions as the Proton acceptor in the catalytic mechanism. The 234-residue stretch at 111–344 (HEYGNSICVT…VTIRREQGHD (234 aa)) folds into the Radical SAM core domain. Cysteines 118 and 349 form a disulfide. [4Fe-4S] cluster is bound by residues cysteine 125, cysteine 129, and cysteine 132. Residues 175-176 (GE), serine 207, 230-232 (SLH), and asparagine 306 each bind S-adenosyl-L-methionine. The S-methylcysteine intermediate role is filled by cysteine 349.

Belongs to the radical SAM superfamily. RlmN family. It depends on [4Fe-4S] cluster as a cofactor.

Its subcellular location is the cytoplasm. The catalysed reaction is adenosine(2503) in 23S rRNA + 2 reduced [2Fe-2S]-[ferredoxin] + 2 S-adenosyl-L-methionine = 2-methyladenosine(2503) in 23S rRNA + 5'-deoxyadenosine + L-methionine + 2 oxidized [2Fe-2S]-[ferredoxin] + S-adenosyl-L-homocysteine. It carries out the reaction adenosine(37) in tRNA + 2 reduced [2Fe-2S]-[ferredoxin] + 2 S-adenosyl-L-methionine = 2-methyladenosine(37) in tRNA + 5'-deoxyadenosine + L-methionine + 2 oxidized [2Fe-2S]-[ferredoxin] + S-adenosyl-L-homocysteine. Its function is as follows. Specifically methylates position 2 of adenine 2503 in 23S rRNA and position 2 of adenine 37 in tRNAs. The chain is Probable dual-specificity RNA methyltransferase RlmN from Bacillus cytotoxicus (strain DSM 22905 / CIP 110041 / 391-98 / NVH 391-98).